Consider the following 218-residue polypeptide: Putative NAD(P)H nitroreductase SH0546 (218 aa).

Belongs to the nitroreductase family. The cofactor is FMN.

This Staphylococcus haemolyticus (strain JCSC1435) protein is Putative NAD(P)H nitroreductase SH0546.